Reading from the N-terminus, the 347-residue chain is Probable replication factor C subunit 5 (347 aa).

Gly64–Thr71 is a binding site for ATP.

The protein belongs to the activator 1 small subunits family. As to quaternary structure, heteropentamer of various rfc subunits that forms a complex (RFC) with PCNA in the presence of ATP.

The protein resides in the nucleus. The elongation of primed DNA templates by DNA polymerase delta and epsilon requires the action of the accessory proteins PCNA and activator 1. The protein is Probable replication factor C subunit 5 (rfc5) of Dictyostelium discoideum (Social amoeba).